The following is a 364-amino-acid chain: Growth hormone secretagogue receptor type 1 (364 aa).

At methionine 1–proline 40 the chain is on the extracellular side. 2 N-linked (GlcNAc...) asparagine glycosylation sites follow: asparagine 13 and asparagine 26. The helical transmembrane segment at leucine 41–valine 66 threads the bilayer. At valine 67–glutamate 72 the chain is on the cytoplasmic side. A helical membrane pass occupies residues leucine 73–proline 96. The Extracellular segment spans residues leucine 97 to leucine 117. Cysteine 115 and cysteine 197 are oxidised to a cystine. Residues phenylalanine 118–glutamate 139 traverse the membrane as a helical segment. Residues arginine 140 to valine 162 lie on the Cytoplasmic side of the membrane. The chain crosses the membrane as a helical span at residues isoleucine 163–valine 183. Topologically, residues glutamate 184–valine 211 are extracellular. N-linked (GlcNAc...) asparagine glycosylation occurs at asparagine 187. The chain crosses the membrane as a helical span at residues methionine 212–glycine 235. Residues arginine 236 to leucine 263 lie on the Cytoplasmic side of the membrane. Residues alanine 264–serine 285 form a helical membrane-spanning segment. The Extracellular segment spans residues lysine 286–cysteine 302. Residues asparagine 303–lysine 326 form a helical membrane-spanning segment. Residues lysine 327–threonine 364 are Cytoplasmic-facing.

Belongs to the G-protein coupled receptor 1 family.

Its subcellular location is the cell membrane. Receptor for ghrelin, coupled to G-alpha-11 proteins. Stimulates growth hormone secretion. Also binds other growth hormone releasing peptides (GHRP) (e.g. Met-enkephalin and GHRP-6) as well as non-peptide, low molecular weight secretagogues (e.g. L-692,429, MK-0677, adenosine). In Rattus norvegicus (Rat), this protein is Growth hormone secretagogue receptor type 1 (Ghsr).